The chain runs to 103 residues: Large ribosomal subunit protein bL21 (103 aa).

Belongs to the bacterial ribosomal protein bL21 family. In terms of assembly, part of the 50S ribosomal subunit. Contacts protein L20.

Its function is as follows. This protein binds to 23S rRNA in the presence of protein L20. The chain is Large ribosomal subunit protein bL21 from Pseudomonas fluorescens (strain Pf0-1).